The following is a 277-amino-acid chain: Large ribosomal subunit protein uL2 (277 aa).

Residues 211–277 (SRWKGVRPTV…KLIVRGRKKK (67 aa)) form a disordered region.

The protein belongs to the universal ribosomal protein uL2 family. Part of the 50S ribosomal subunit. Forms a bridge to the 30S subunit in the 70S ribosome.

One of the primary rRNA binding proteins. Required for association of the 30S and 50S subunits to form the 70S ribosome, for tRNA binding and peptide bond formation. It has been suggested to have peptidyltransferase activity; this is somewhat controversial. Makes several contacts with the 16S rRNA in the 70S ribosome. The protein is Large ribosomal subunit protein uL2 of Staphylococcus epidermidis (strain ATCC 35984 / DSM 28319 / BCRC 17069 / CCUG 31568 / BM 3577 / RP62A).